The chain runs to 185 residues: MAETAYIPRLREVYDRDIRSKLTEQFGLTNVMQVPRLDKVVINMGVGEAVNDRKKVELAAGDLALIAGQKPIVTHSRKAIATFKLREGQAIGAKVTLRKAKMYEFIDRLINVALPRVRDFRGLNPKSFDGRGNYSLGLKEHIVFPEIDYDKSGESWGMDITVCTTAATDEQARALLTAFNFPFRQ.

It belongs to the universal ribosomal protein uL5 family. Part of the 50S ribosomal subunit; part of the 5S rRNA/L5/L18/L25 subcomplex. Contacts the 5S rRNA and the P site tRNA. Forms a bridge to the 30S subunit in the 70S ribosome.

In terms of biological role, this is one of the proteins that bind and probably mediate the attachment of the 5S RNA into the large ribosomal subunit, where it forms part of the central protuberance. In the 70S ribosome it contacts protein S13 of the 30S subunit (bridge B1b), connecting the 2 subunits; this bridge is implicated in subunit movement. Contacts the P site tRNA; the 5S rRNA and some of its associated proteins might help stabilize positioning of ribosome-bound tRNAs. This is Large ribosomal subunit protein uL5 from Afipia carboxidovorans (strain ATCC 49405 / DSM 1227 / KCTC 32145 / OM5) (Oligotropha carboxidovorans).